The primary structure comprises 205 residues: GTP cyclohydrolase 1 (205 aa).

Zn(2+) contacts are provided by cysteine 95, histidine 98, and cysteine 166.

This sequence belongs to the GTP cyclohydrolase I family. In terms of assembly, toroid-shaped homodecamer, composed of two pentamers of five dimers.

It carries out the reaction GTP + H2O = 7,8-dihydroneopterin 3'-triphosphate + formate + H(+). It functions in the pathway cofactor biosynthesis; 7,8-dihydroneopterin triphosphate biosynthesis; 7,8-dihydroneopterin triphosphate from GTP: step 1/1. The polypeptide is GTP cyclohydrolase 1 (Maricaulis maris (strain MCS10) (Caulobacter maris)).